Reading from the N-terminus, the 450-residue chain is Runt-related transcription factor 1 (450 aa).

The interval 1–25 (MRIPVDASTSRRFTPPSTALSPGKM) is disordered. Polar residues predominate over residues 7–20 (ASTSRRFTPPSTAL). Threonine 14 is modified (phosphothreonine). Serine 21 carries the post-translational modification Phosphoserine. 2 positions are modified to N6-acetyllysine: lysine 24 and lysine 43. A Runt domain is found at 50-178 (SMVEVLADHP…TVDGPREPRR (129 aa)). Residues 80–84 (RCNKT) form an interaction with DNA region. Residues asparagine 112, glutamate 116, arginine 139, and valine 170 each coordinate chloride. Interaction with DNA regions lie at residues 135–143 (RFVGRSGRG) and 168–177 (ITVDGPREPR). Disordered stretches follow at residues 170–195 (VDGP…LSFS) and 209–252 (MRVS…SPPW). A phosphoserine mark is found at serine 193 and serine 212. Positions 222-247 (PRASLNHSTAFNPQPQSQMQDARQIQ) are enriched in polar residues. Serine 249 is subject to Phosphoserine; by HIPK2. Serine 266 and serine 267 each carry phosphoserine. Residue threonine 272 is modified to Phosphothreonine; by HIPK2. Serine 275 is subject to Phosphoserine; by HIPK2. The interval 290 to 369 (SSRLSTAPDL…SQAQAGPFQT (80 aa)) is interaction with KAT6A. Threonine 295 is modified (phosphothreonine). The interaction with KAT6B stretch occupies residues 306 to 398 (RQFPTLPSIS…MVGGERSPPR (93 aa)). The interaction with FOXP3 stretch occupies residues 360 to 400 (SQAQAGPFQTGSPSYHLYYGTSAGSYQFSMVGGERSPPRIL). Residues 410–450 (AALLNPSLPSQSDVVETEGSHSNSPTNMPPARLEEAVWRPY) form a disordered region. Polar residues predominate over residues 416–435 (SLPSQSDVVETEGSHSNSPT). Serine 433 bears the Phosphoserine mark. Positions 441–450 (RLEEAVWRPY) are enriched in basic and acidic residues.

As to quaternary structure, heterodimer with CBFB. RUNX1 binds DNA as a monomer and through the Runt domain. DNA-binding is increased by heterodimerization. Interacts with TLE1 and ALYREF/THOC4. Interacts with ELF1, ELF2 and SPI1. Interacts via its Runt domain with the ELF4 N-terminal region. Interaction with ELF2 isoform 2 (NERF-1a) may act to repress RUNX1-mediated transactivation. Interacts with KAT6A and KAT6B. Interacts with SUV39H1, leading to abrogation of transactivating and DNA-binding properties of RUNX1. Interacts with YAP1 and HIPK2. Interaction with CDK6 prevents myeloid differentiation, reducing its transcription transactivation activity. Found in a complex with PRMT5, RUNX1 and CBFB. Interacts with FOXP3. Interacts with TBX21. Interacts with DPF2. In terms of processing, phosphorylated in its C-terminus upon IL-6 treatment. Phosphorylation enhances interaction with KAT6A. Methylated. Post-translationally, phosphorylated in Ser-249 Thr-272 and Ser-275 by HIPK2 when associated with CBFB and DNA. This phosphorylation promotes subsequent EP300 phosphorylation. As to expression, expressed in skeletal muscle.

The protein resides in the nucleus. CBF binds to the core site, 5'-PYGPYGGT-3', of a number of enhancers and promoters, including murine leukemia virus, polyomavirus enhancer, T-cell receptor enhancers, LCK, IL-3 and GM-CSF promoters. The alpha subunit binds DNA and appears to have a role in the development of normal hematopoiesis. Isoform AML-1L interferes with the transactivation activity of RUNX1. Acts synergistically with ELF4 to transactivate the IL-3 promoter and with ELF2 to transactivate the BLK promoter. Inhibits KAT6B-dependent transcriptional activation. Controls the anergy and suppressive function of regulatory T-cells (Treg) by associating with FOXP3. Activates the expression of IL2 and IFNG and down-regulates the expression of TNFRSF18, IL2RA and CTLA4, in conventional T-cells. Positively regulates the expression of RORC in T-helper 17 cells. In Rattus norvegicus (Rat), this protein is Runt-related transcription factor 1 (Runx1).